The sequence spans 139 residues: MVGLSRLRGGGLLLVLALLPLALDGKPLEEAPTAPSRIIPFSRPVRKQSQAVLDPMVHPERPAGSGDDGDSRRLEGLAKEALGDGCFGQRIDRICNVSGMGCNHVRTDPAPTALARIIPFSRPVRKESRAALDRMQQPG.

Residues 1 to 25 (MVGLSRLRGGGLLLVLALLPLALDG) form the signal peptide. A propeptide spanning residues 26-75 (KPLEEAPTAPSRIIPFSRPVRKQSQAVLDPMVHPERPAGSGDDGDSRRLE) is cleaved from the precursor. Positions 45-72 (VRKQSQAVLDPMVHPERPAGSGDDGDSR) are disordered. A disulfide bridge links Cys-86 with Cys-102. Residues 117–139 (IIPFSRPVRKESRAALDRMQQPG) constitute a propeptide that is removed on maturation.

Belongs to the natriuretic peptide family. As to expression, expressed by the venom gland.

The protein resides in the secreted. Snake venom natriuretic peptide that dose-dependently induces the rapid relaxation of rat aortic strips phenylephrine-precontracted. Acts by stimulating cGMP production in a dose-dependent manner (by probably activating NPR1 and/or NPR2). May also show potent hypotensive effects. A synthetic peptide (AA 77-108, where the Cys-95 is replaced by a Ser) increases sodium excretion and urinary volume in rat kidneys. The sequence is that of Natriuretic peptide Mc-NP from Micrurus corallinus (Brazilian coral snake).